Consider the following 165-residue polypeptide: MAENQQAAGNENQNQPQFALQRIYVKDLSFESPNSPLVFQEQWKPQVNLDLNTSHNKISDNQYEVVLSLTVTAKVGEKVAYIVEIQQGGVFMISGIEGPQLGQMLGAYCPTILFPYAREAIDGIVNKGSFPALMLAPVNFDAIYAQALKRKQEEAAGEAKEEQTH.

Belongs to the SecB family. As to quaternary structure, homotetramer, a dimer of dimers. One homotetramer interacts with 1 SecA dimer.

It is found in the cytoplasm. Its function is as follows. One of the proteins required for the normal export of preproteins out of the cell cytoplasm. It is a molecular chaperone that binds to a subset of precursor proteins, maintaining them in a translocation-competent state. It also specifically binds to its receptor SecA. This is Protein-export protein SecB from Marinobacter nauticus (strain ATCC 700491 / DSM 11845 / VT8) (Marinobacter aquaeolei).